Reading from the N-terminus, the 297-residue chain is UDP-N-acetylglucosamine transporter TMEM241 (297 aa).

The next 10 membrane-spanning stretches (helical) occupy residues 7 to 29 (LLGL…VLSV), 32 to 52 (FTYP…LLHM), 69 to 89 (VLIW…GSKA), 93 to 113 (LAVP…CGYQ), 121 to 141 (TSLS…CLPF), 146 to 166 (FDPD…SYKI), 187 to 207 (IFSM…FGAL), 211 to 231 (FLYF…GFFL), 250 to 270 (WILC…DMAL), and 271 to 291 (TKAT…LVFS).

It belongs to the nucleotide-sugar transporter family. SLC35A subfamily. Widely expressed with high expression in lung.

Its subcellular location is the golgi apparatus. It localises to the cis-Golgi network membrane. In terms of biological role, golgi-localized UDP-N-acetylglucosamine (UDP-GlcNAc) transporter that transports UDP-N-acetylglucosamine into Golgi lumen. Contributes to lysosomal targeting of NPC2, a key protein required for lysosomal cholesterol exiting, and that utilizes the mannose-6-phosphate (M6P) modification pathway for its lysosomal targeting. The chain is UDP-N-acetylglucosamine transporter TMEM241 (Tmem241) from Mus musculus (Mouse).